The sequence spans 418 residues: eIF5-mimic protein 2-B (418 aa).

The span at M1–R15 shows a compositional bias: polar residues. The segment at M1–P29 is disordered. The region spanning N247–E414 is the W2 domain.

This sequence belongs to the BZW family.

Functionally, translation initiation regulator which may repress repeat-associated non-AUG (RAN) initiated translation probably by acting as a competitive inhibitor of eukaryotic translation initiation factor 5 (EIF5) function. Enhances histone H4 gene transcription but does not seem to bind DNA directly. This Danio rerio (Zebrafish) protein is eIF5-mimic protein 2-B (bzw1b).